Consider the following 337-residue polypeptide: UDP-3-O-acylglucosamine N-acyltransferase (337 aa).

The active-site Proton acceptor is the H238.

It belongs to the transferase hexapeptide repeat family. LpxD subfamily. Homotrimer.

It carries out the reaction a UDP-3-O-[(3R)-3-hydroxyacyl]-alpha-D-glucosamine + a (3R)-hydroxyacyl-[ACP] = a UDP-2-N,3-O-bis[(3R)-3-hydroxyacyl]-alpha-D-glucosamine + holo-[ACP] + H(+). The protein operates within bacterial outer membrane biogenesis; LPS lipid A biosynthesis. Its function is as follows. Catalyzes the N-acylation of UDP-3-O-acylglucosamine using 3-hydroxyacyl-ACP as the acyl donor. Is involved in the biosynthesis of lipid A, a phosphorylated glycolipid that anchors the lipopolysaccharide to the outer membrane of the cell. The chain is UDP-3-O-acylglucosamine N-acyltransferase from Xanthomonas axonopodis pv. citri (strain 306).